We begin with the raw amino-acid sequence, 659 residues long: Ion-translocating oxidoreductase complex subunit C (659 aa).

4Fe-4S ferredoxin-type domains follow at residues threonine 366 to tyrosine 397 and lysine 407 to tyrosine 436. 8 residues coordinate [4Fe-4S] cluster: cysteine 377, cysteine 380, cysteine 383, cysteine 387, cysteine 416, cysteine 419, cysteine 422, and cysteine 426.

Belongs to the 4Fe4S bacterial-type ferredoxin family. RnfC subfamily. As to quaternary structure, the complex is composed of six subunits: RnfA, RnfB, RnfC, RnfD, RnfE and RnfG. [4Fe-4S] cluster serves as cofactor.

It is found in the cell inner membrane. In terms of biological role, part of a membrane-bound complex that couples electron transfer with translocation of ions across the membrane. This chain is Ion-translocating oxidoreductase complex subunit C, found in Yersinia pseudotuberculosis serotype IB (strain PB1/+).